The chain runs to 335 residues: MSKEAEMSIAVSALFPGFRFSPTDVELISYYLRRKIDGDENSVAVIAEVEIYKFEPWDLPEESKLKSENEWFYFCARGRKYPHGSQSRRATQLGYWKATGKERSVKSGNQVVGTKRTLVFHIGRAPRGERTEWIMHEYCIHGAPQDALVVCRLRKNADFRASSTQKMEDGVVQDDGYVGQRGGLEKEDKSYYESEHQIPNGDIAESSNVVEDQADTDDDCYAEILNDDIIKLDEEALKASQAFRPTNPTHQETISSESSSKRSKCGIKKESTETMNCYALFRIKNVAGTDSSWRFPNPFKIKKDDSQRLMKNVLATTVFLAILFSFFWTVLIARN.

Residues 14–156 (LFPGFRFSPT…ALVVCRLRKN (143 aa)) form the NAC domain. Residues 112–162 (VGTKRTLVFHIGRAPRGERTEWIMHEYCIHGAPQDALVVCRLRKNADFRAS) mediate DNA binding. Residues 245 to 254 (PTNPTHQETI) are compositionally biased toward polar residues. The tract at residues 245-267 (PTNPTHQETISSESSSKRSKCGI) is disordered. A helical transmembrane segment spans residues 313–333 (VLATTVFLAILFSFFWTVLIA).

Proteolytically cleaved, probably by metalloprotease activity. This cleavage mediates a translocation from the plasma membrane to the nucleus. In terms of tissue distribution, expressed in seeds, leaves, roots and inflorescence. Expressed in roots, rosette leaves, cauline leaves, shoot apex, stems and flowers.

The protein localises to the cell membrane. It is found in the nucleus. Transcriptional activator activated by proteolytic cleavage through regulated intramembrane proteolysis (RIP), probably via metalloprotease activity. Regulates gibberellic acid-mediated salt-responsive repression of seed germination and flowering via FT, thus delaying seed germination under high salinity conditions. The protein is NAC domain-containing protein 40 of Arabidopsis thaliana (Mouse-ear cress).